The following is a 128-amino-acid chain: Small ribosomal subunit protein eS8 (128 aa).

The interval M1–D41 is disordered.

The protein belongs to the eukaryotic ribosomal protein eS8 family. As to quaternary structure, part of the 30S ribosomal subunit.

In Sulfolobus acidocaldarius (strain ATCC 33909 / DSM 639 / JCM 8929 / NBRC 15157 / NCIMB 11770), this protein is Small ribosomal subunit protein eS8.